We begin with the raw amino-acid sequence, 75 residues long: Vacuolar ATPase assembly integral membrane protein VMA21 (75 aa).

The Cytoplasmic segment spans residues 1–8 (MPVDVAPG). Residues 9-29 (VIKKLMFFTAAMVICPLLTFF) traverse the membrane as a helical segment. The Lumenal portion of the chain corresponds to 30-41 (SIKQFTTNTIVS). The helical transmembrane segment at 42–62 (GGLAALAANLVLIGYIVVAFM) threads the bilayer. The Cytoplasmic portion of the chain corresponds to 63–75 (EDTTDVKAESKKD).

Belongs to the VMA21 family.

Its subcellular location is the endoplasmic reticulum membrane. The protein localises to the endoplasmic reticulum-Golgi intermediate compartment membrane. The protein resides in the cytoplasmic vesicle. It is found in the COPII-coated vesicle membrane. Its function is as follows. Required for the assembly of the V0 complex of the vacuolar ATPase (V-ATPase) in the endoplasmic reticulum. The protein is Vacuolar ATPase assembly integral membrane protein VMA21 of Vanderwaltozyma polyspora (strain ATCC 22028 / DSM 70294 / BCRC 21397 / CBS 2163 / NBRC 10782 / NRRL Y-8283 / UCD 57-17) (Kluyveromyces polysporus).